A 168-amino-acid chain; its full sequence is Peptidyl-prolyl cis-trans isomerase-like 3 (168 aa).

Residues 1–156 enclose the PPIase cyclophilin-type domain; the sequence is MSVTLHTNVG…SEIRMTGVTV (156 aa).

The protein belongs to the cyclophilin-type PPIase family. PPIL3 subfamily.

It carries out the reaction [protein]-peptidylproline (omega=180) = [protein]-peptidylproline (omega=0). Functionally, PPIases accelerate the folding of proteins. It catalyzes the cis-trans isomerization of proline imidic peptide bonds in oligopeptides. In Mycosarcoma maydis (Corn smut fungus), this protein is Peptidyl-prolyl cis-trans isomerase-like 3 (CYP10).